A 121-amino-acid chain; its full sequence is Non-structural protein 8 (121 aa).

Positions M1–C15 are cleaved as a signal peptide. In terms of domain architecture, SARS ORF8 Ig-like spans E19–I121. 3 cysteine pairs are disulfide-bonded: C25–C90, C37–C102, and C61–C83.

This is Non-structural protein 8 from Bat coronavirus HKU3 (BtCoV).